The sequence spans 750 residues: Photosystem I P700 chlorophyll a apoprotein A1 (750 aa).

The next 8 membrane-spanning stretches (helical) occupy residues 70–93 (VFSA…FHGA), 156–179 (LYCT…FHYH), 195–219 (LNHH…HVSL), 291–309 (IAHH…GHMY), 346–369 (WHAQ…HHMY), 385–411 (LSLF…IFMV), 433–455 (AIIS…LYIH), and 531–549 (FLVH…LILL). [4Fe-4S] cluster is bound by residues C573 and C582. 2 consecutive transmembrane segments (helical) span residues 589–610 (HVFL…HFSW) and 664–686 (LSAY…MFLF). H675 serves as a coordination point for chlorophyll a'. Chlorophyll a is bound by residues M683 and Y691. Position 692 (W692) interacts with phylloquinone. A helical transmembrane segment spans residues 724–744 (AVGVTHYLLGGIATTWAFFLA).

It belongs to the PsaA/PsaB family. In terms of assembly, the PsaA/B heterodimer binds the P700 chlorophyll special pair and subsequent electron acceptors. PSI consists of a core antenna complex that captures photons, and an electron transfer chain that converts photonic excitation into a charge separation. The eukaryotic PSI reaction center is composed of at least 11 subunits. The cofactor is P700 is a chlorophyll a/chlorophyll a' dimer, A0 is one or more chlorophyll a, A1 is one or both phylloquinones and FX is a shared 4Fe-4S iron-sulfur center..

It localises to the plastid. Its subcellular location is the chloroplast thylakoid membrane. The enzyme catalyses reduced [plastocyanin] + hnu + oxidized [2Fe-2S]-[ferredoxin] = oxidized [plastocyanin] + reduced [2Fe-2S]-[ferredoxin]. PsaA and PsaB bind P700, the primary electron donor of photosystem I (PSI), as well as the electron acceptors A0, A1 and FX. PSI is a plastocyanin-ferredoxin oxidoreductase, converting photonic excitation into a charge separation, which transfers an electron from the donor P700 chlorophyll pair to the spectroscopically characterized acceptors A0, A1, FX, FA and FB in turn. Oxidized P700 is reduced on the lumenal side of the thylakoid membrane by plastocyanin. The chain is Photosystem I P700 chlorophyll a apoprotein A1 from Coffea arabica (Arabian coffee).